The chain runs to 78 residues: MFGRIGLPEILLILAIALIIFGPKKLPELGKALGSSLREFKSATKELREEVNEVEEEVKENKSSDVKENEDNKTEKST.

The chain crosses the membrane as a helical span at residues 1 to 21 (MFGRIGLPEILLILAIALIIF). Positions 50 to 78 (EVNEVEEEVKENKSSDVKENEDNKTEKST) are disordered. Residues 59–78 (KENKSSDVKENEDNKTEKST) are compositionally biased toward basic and acidic residues.

The protein belongs to the TatA/E family. As to quaternary structure, forms a complex with TatC.

Its subcellular location is the cell membrane. In terms of biological role, part of the twin-arginine translocation (Tat) system that transports large folded proteins containing a characteristic twin-arginine motif in their signal peptide across membranes. TatA could form the protein-conducting channel of the Tat system. This Natranaerobius thermophilus (strain ATCC BAA-1301 / DSM 18059 / JW/NM-WN-LF) protein is Sec-independent protein translocase protein TatA.